A 768-amino-acid chain; its full sequence is Cullin-3-B (768 aa).

A disordered region spans residues 677 to 698 (VAAKQGESDPERKETRQKVDDD). Over residues 682-698 (GESDPERKETRQKVDDD) the composition is skewed to basic and acidic residues. Positions 698 to 760 (DRKHEIEAAI…REYLARTPED (63 aa)) constitute a Cullin neddylation domain. A Glycyl lysine isopeptide (Lys-Gly) (interchain with G-Cter in NEDD8) cross-link involves residue Lys712.

The protein belongs to the cullin family. In terms of assembly, component of multiple BCR (BTB-CUL3-RBX1) E3 ubiquitin-protein ligase complexes formed of cul3, rbx1 and a variable BTB domain-containing protein acting as both, adapter to cullin and substrate recognition subunit. Interacts with btbd6. Post-translationally, neddylated. Attachment of NEDD8 is required for the E3 ubiquitin-protein ligase activity of the SCF-like complex.

It is found in the nucleus. It participates in protein modification; protein ubiquitination. Probable core component of cullin-based SCF-like E3 ubiquitin-protein ligase complexes which mediate the ubiquitination and subsequent proteasomal degradation of target proteins. The E3 ubiquitin-protein ligase activity of the complex is dependent on the neddylation of the cullin subunit. Involved in ER-Golgi transport by regulating the size of COPII coats, thereby playing a key role in collagen export, which is required for embryonic stem (ES) cells division. May play a role in the regulation of mittotic entry via ubiquitination of aurka. The protein is Cullin-3-B (cul3b) of Xenopus laevis (African clawed frog).